Here is a 283-residue protein sequence, read N- to C-terminus: Glutamate racemase (283 aa).

Substrate is bound by residues 28–29 and 60–61; these read DS and YG. The active-site Proton donor/acceptor is the cysteine 92. 93-94 contributes to the substrate binding site; that stretch reads NT. Cysteine 204 (proton donor/acceptor) is an active-site residue. 205–206 is a substrate binding site; that stretch reads TH.

This sequence belongs to the aspartate/glutamate racemases family.

It catalyses the reaction L-glutamate = D-glutamate. It functions in the pathway cell wall biogenesis; peptidoglycan biosynthesis. In terms of biological role, provides the (R)-glutamate required for cell wall biosynthesis. This chain is Glutamate racemase, found in Salmonella gallinarum (strain 287/91 / NCTC 13346).